Here is a 1024-residue protein sequence, read N- to C-terminus: Multidrug resistance protein MdtC (1024 aa).

The next 12 helical transmembrane spans lie at 12-32 (VATTLLTLAITLSGIIGFSLL), 333-353 (EVERSLVIAVALVILVVFIFL), 360-380 (LIPAVAVPVSLIGTFAAMYLC), 387-407 (LSLMALTIATGFVVDDAIVVL), 435-455 (VLSMSISLVAVFIPLLLMAGL), 469-489 (VAIGISLVISLTLTPMMCAWL), 528-548 (WVMVVLLSTIALNVWLYISIP), 853-873 (LWLIMAAIATVYIVLGILYES), 875-895 (VHPLTILSTLPSAGVGALLAL), 897-917 (LFDAPFSLIALIGIMLLIGIV), 953-973 (PIIMTTLAALFGALPLVLSSG), and 984-1004 (ITIVGGLVVSQLLTLYTTPVI).

The protein belongs to the resistance-nodulation-cell division (RND) (TC 2.A.6) family. MdtC subfamily. Part of a tripartite efflux system composed of MdtA, MdtB and MdtC. MdtC forms a heteromultimer with MdtB.

The protein resides in the cell inner membrane. In Yersinia pestis bv. Antiqua (strain Antiqua), this protein is Multidrug resistance protein MdtC.